Reading from the N-terminus, the 164-residue chain is Peptide deformylase (164 aa).

Fe cation is bound by residues cysteine 87 and histidine 129. Residue glutamate 130 is part of the active site. Histidine 133 is a binding site for Fe cation.

The protein belongs to the polypeptide deformylase family. Requires Fe(2+) as cofactor.

It carries out the reaction N-terminal N-formyl-L-methionyl-[peptide] + H2O = N-terminal L-methionyl-[peptide] + formate. Removes the formyl group from the N-terminal Met of newly synthesized proteins. Requires at least a dipeptide for an efficient rate of reaction. N-terminal L-methionine is a prerequisite for activity but the enzyme has broad specificity at other positions. This Thermotoga neapolitana (strain ATCC 49049 / DSM 4359 / NBRC 107923 / NS-E) protein is Peptide deformylase.